The primary structure comprises 184 residues: Ras-related protein Rap1 (184 aa).

Position 10–17 (10–17 (GSGGVGKS)) interacts with GTP. The Effector region motif lies at 32–40 (YDPTIEDSY). GTP-binding positions include 57–61 (DTAGT) and 116–119 (NKCD). The residue at position 181 (cysteine 181) is a Cysteine methyl ester. Cysteine 181 carries S-geranylgeranyl cysteine lipidation. Positions 182–184 (VLL) are cleaved as a propeptide — removed in mature form.

The protein belongs to the small GTPase superfamily. Ras family.

The protein localises to the cell membrane. The catalysed reaction is GTP + H2O = GDP + phosphate + H(+). Its activity is regulated as follows. Alternates between an inactive form bound to GDP and an active form bound to GTP. Activated by a guanine nucleotide-exchange factor (GEF) and inactivated by a GTPase-activating protein (GAP). Ras proteins bind GDP/GTP and possess intrinsic GTPase activity. Plays a role in photoreceptor cell determination. In Drosophila melanogaster (Fruit fly), this protein is Ras-related protein Rap1.